A 540-amino-acid chain; its full sequence is Putative cysteine ligase BshC (540 aa).

Residues Ile-425–Ile-453 are a coiled coil.

Belongs to the BshC family.

Functionally, involved in bacillithiol (BSH) biosynthesis. May catalyze the last step of the pathway, the addition of cysteine to glucosamine malate (GlcN-Mal) to generate BSH. In Staphylococcus aureus (strain NCTC 8325 / PS 47), this protein is Putative cysteine ligase BshC.